A 1109-amino-acid chain; its full sequence is RNA2 polyprotein (1109 aa).

It belongs to the nepoviruses RNA2 polyprotein family. Specific enzymatic cleavages in vivo by the P1 encoded 3C-like protease yield mature proteins.

It localises to the host cell junction. It is found in the host plasmodesma. The protein localises to the host cytoplasm. Its subcellular location is the host nucleus. The protein resides in the virion. Implicated in RNA2 replication. Could also be required for nematode transmission of the virus. Functionally, transports viral genome to neighboring plant cells directly through plasmosdesmata, without any budding. The movement protein allows efficient cell to cell propagation, by bypassing the host cell wall barrier. Acts by forming a tubular structure at the host plasmodesmata, enlarging it enough to allow free passage of virion capsids. In Vitis rupestris (Grape), this protein is RNA2 polyprotein.